Reading from the N-terminus, the 315-residue chain is tRNA dimethylallyltransferase (315 aa).

10–17 (GPTASGKS) provides a ligand contact to ATP. A substrate-binding site is contributed by 12–17 (TASGKS). Residues 35-38 (DSMQ) are interaction with substrate tRNA.

It belongs to the IPP transferase family. As to quaternary structure, monomer. Mg(2+) is required as a cofactor.

It carries out the reaction adenosine(37) in tRNA + dimethylallyl diphosphate = N(6)-dimethylallyladenosine(37) in tRNA + diphosphate. Its function is as follows. Catalyzes the transfer of a dimethylallyl group onto the adenine at position 37 in tRNAs that read codons beginning with uridine, leading to the formation of N6-(dimethylallyl)adenosine (i(6)A). The protein is tRNA dimethylallyltransferase of Thermoanaerobacter pseudethanolicus (strain ATCC 33223 / 39E) (Clostridium thermohydrosulfuricum).